We begin with the raw amino-acid sequence, 168 residues long: S-ribosylhomocysteine lyase (168 aa).

Fe cation-binding residues include H54, H58, and C128.

This sequence belongs to the LuxS family. In terms of assembly, homodimer. Fe cation serves as cofactor.

The catalysed reaction is S-(5-deoxy-D-ribos-5-yl)-L-homocysteine = (S)-4,5-dihydroxypentane-2,3-dione + L-homocysteine. Involved in the synthesis of autoinducer 2 (AI-2) which is secreted by bacteria and is used to communicate both the cell density and the metabolic potential of the environment. The regulation of gene expression in response to changes in cell density is called quorum sensing. Catalyzes the transformation of S-ribosylhomocysteine (RHC) to homocysteine (HC) and 4,5-dihydroxy-2,3-pentadione (DPD). The polypeptide is S-ribosylhomocysteine lyase (Mannheimia succiniciproducens (strain KCTC 0769BP / MBEL55E)).